Reading from the N-terminus, the 553-residue chain is Glycerol kinase 2 (553 aa).

Thr20 is a substrate binding site. Arg24 contacts ATP. Residues Arg94, Tyr148, and Asp259 each contribute to the substrate site. Residues Thr281, Gly326, and 427 to 431 (GMTNN) each bind ATP. Residues 526 to 546 (IFSSLPLGFFIVSSMVMLIGA) traverse the membrane as a helical segment.

This sequence belongs to the FGGY kinase family. In terms of assembly, interacts with ARMC12. Interacts with PLD6. As to expression, testis-specific. Expressed in the midpiece of spermatozoa.

The protein resides in the mitochondrion outer membrane. It localises to the cytoplasm. It catalyses the reaction glycerol + ATP = sn-glycerol 3-phosphate + ADP + H(+). It functions in the pathway polyol metabolism; glycerol degradation via glycerol kinase pathway; sn-glycerol 3-phosphate from glycerol: step 1/1. Its function is as follows. Key enzyme in the regulation of glycerol uptake and metabolism. Essential for male fertility and sperm mitochondrial sheath formation. Required for proper arrangement of crescent-like mitochondria to form the mitochondrial sheath during spermatogenesis. Can induce mitochondrial clustering through interactions with PLD6 and up-regulation of phosphatidic acid synthesis in the mitochondria. The chain is Glycerol kinase 2 (GK2) from Homo sapiens (Human).